The chain runs to 422 residues: Serine--tRNA ligase (422 aa).

Position 229-231 (229-231 (TAE)) interacts with L-serine. 260–262 (RKE) lines the ATP pocket. Position 283 (glutamate 283) interacts with L-serine. 347 to 350 (EISS) contributes to the ATP binding site. Residue serine 383 participates in L-serine binding.

Belongs to the class-II aminoacyl-tRNA synthetase family. Type-1 seryl-tRNA synthetase subfamily. Homodimer. The tRNA molecule binds across the dimer.

It is found in the cytoplasm. It catalyses the reaction tRNA(Ser) + L-serine + ATP = L-seryl-tRNA(Ser) + AMP + diphosphate + H(+). It carries out the reaction tRNA(Sec) + L-serine + ATP = L-seryl-tRNA(Sec) + AMP + diphosphate + H(+). The protein operates within aminoacyl-tRNA biosynthesis; selenocysteinyl-tRNA(Sec) biosynthesis; L-seryl-tRNA(Sec) from L-serine and tRNA(Sec): step 1/1. Its function is as follows. Catalyzes the attachment of serine to tRNA(Ser). Is also able to aminoacylate tRNA(Sec) with serine, to form the misacylated tRNA L-seryl-tRNA(Sec), which will be further converted into selenocysteinyl-tRNA(Sec). The protein is Serine--tRNA ligase of Geobacter sulfurreducens (strain ATCC 51573 / DSM 12127 / PCA).